A 202-amino-acid polypeptide reads, in one-letter code: Superoxide dismutase [Mn] (202 aa).

Position 27 (H27) interacts with Mn(2+). Phosphothreonine occurs at positions 34 and 70. Residues H82, D164, and H168 each contribute to the Mn(2+) site.

It belongs to the iron/manganese superoxide dismutase family. As to quaternary structure, homodimer; under aerobic conditions. Under anaerobic conditions it is a component of the so-called 'green protein' complex (GPC), which consists of at least two components, SodA and a nucleoside diphosphate kinase (NDK). Mn(2+) is required as a cofactor.

The protein localises to the cytoplasm. The enzyme catalyses 2 superoxide + 2 H(+) = H2O2 + O2. In terms of biological role, destroys superoxide anion radicals which are normally produced within the cells and which are toxic to biological systems. Active only in homodimeric state. The protein is Superoxide dismutase [Mn] (sodA) of Virgibacillus halodenitrificans (Bacillus halodenitrificans).